Consider the following 432-residue polypeptide: Anaerobic glycerol-3-phosphate dehydrogenase subunit B (432 aa).

The protein belongs to the anaerobic G-3-P dehydrogenase subunit B family. Composed of a catalytic GlpA/B dimer and of membrane bound GlpC. FMN serves as cofactor.

It carries out the reaction a quinone + sn-glycerol 3-phosphate = dihydroxyacetone phosphate + a quinol. The protein operates within polyol metabolism; glycerol degradation via glycerol kinase pathway; glycerone phosphate from sn-glycerol 3-phosphate (anaerobic route): step 1/1. Functionally, conversion of glycerol 3-phosphate to dihydroxyacetone. Uses fumarate or nitrate as electron acceptor. This Haemophilus influenzae (strain 86-028NP) protein is Anaerobic glycerol-3-phosphate dehydrogenase subunit B.